The chain runs to 649 residues: Sulfate transporter 1.1 (649 aa).

A disordered region spans residues 1–20 (MSGTINPPDGGGSGARNPPV). At 1 to 86 (MSGTINPPDG…AREYTLRKFR (86 aa)) the chain is on the cytoplasmic side. A helical membrane pass occupies residues 87–107 (GDLIAGLTIASLCIPQDIGYA). Over 108-111 (KLAN) the chain is Extracellular. Residues 112 to 132 (VDPKYGLYSSFVPPLIYAGMG) form a helical membrane-spanning segment. Residues 133-136 (SSRD) are Cytoplasmic-facing. A helical membrane pass occupies residues 137–157 (IAIGPVAVVSLLVGTLCQAVI). The Extracellular segment spans residues 158 to 168 (DPKKNPEDYLR). The next 2 membrane-spanning stretches (helical) occupy residues 169 to 189 (LVFT…FLRL) and 190 to 210 (GFLI…GAAI). The Extracellular segment spans residues 211–248 (TIALQQLKGFLGIKTFTKKTDIVSVMHSVFKNAEHGWN). A helical membrane pass occupies residues 249–269 (WQTIVIGASFLTFLLVTKFIG). The Cytoplasmic segment spans residues 270 to 275 (KRNRKL). The chain crosses the membrane as a helical span at residues 276–296 (FWVPAIAPLISVIISTFFVFI). Residues 297–334 (FRADKQGVQIVKHIDQGINPISVHKIFFSGKYFTEGIR) are Extracellular-facing. A helical membrane pass occupies residues 335-355 (IGGIAGMVALTEAVAIARTFA). At 356–367 (AMKDYQIDGNKE) the chain is on the cytoplasmic side. Residues 368-388 (MIALGTMNVVGSMTSCYIATG) traverse the membrane as a helical segment. Residues 389–404 (SFSRSAVNFMAGVETA) are Extracellular-facing. The helical transmembrane segment at 405 to 425 (VSNIVMAIVVALTLEFITPLF) threads the bilayer. Residues 426–431 (KYTPNA) are Cytoplasmic-facing. Residues 432-452 (ILAAIIISAVLGLIDIDAAIL) form a helical membrane-spanning segment. At 453–465 (IWRIDKLDFLACM) the chain is on the extracellular side. Residues 466–486 (GAFLGVIFISVEIGLLIAVVI) form a helical membrane-spanning segment. Topologically, residues 487–649 (SFAKILLQVT…CSTEVAEQQT (163 aa)) are cytoplasmic. One can recognise an STAS domain in the interval 517–640 (QYPDAAQIPG…LTVGDAVAVC (124 aa)).

It belongs to the SLC26A/SulP transporter (TC 2.A.53) family. Interacts with OASA1 through its STAS domain. Expressed in lateral root cap, root hairs, epidermal and cortical cells of roots.

It is found in the membrane. In terms of biological role, high-affinity H(+)/sulfate cotransporter that mediates the uptake of the environmental sulfate by plant roots under low-sulfur conditions. Plays a central role in the regulation of sulfate assimilation. This Arabidopsis thaliana (Mouse-ear cress) protein is Sulfate transporter 1.1 (SULTR1;1).